The sequence spans 260 residues: Nuclear shuttle protein (260 aa).

A disordered region spans residues M1 to R29. The short motif at N21 to R42 is the Bipartite nuclear localization signal element. A Nuclear localization signal motif is present at residues V84–L100. Residues Q154–G191 form an interaction with Arabidopsis thaliana NSI protein region.

Belongs to the begomovirus nuclear shuttle protein family. Binds to single-stranded and double-stranded viral DNA. Interacts with the host nuclear shuttle interacting (NSI) protein. This interaction may allow NSP to recruit NSI monomers to the viral genome and thus regulate nuclear export of viral genome by NSP.

It is found in the host nucleus. It localises to the host cytoplasm. The protein resides in the host cell membrane. Functionally, binds to the genomic viral ssDNA, shuttles it into and out of the cell nucleus. Begomoviruses use 2 proteins to transport their DNA from cell to cell. The nuclear shuttle protein (NSP) shuttles it between nucleus and cytoplasm and the movement protein (MP) probably transports the DNA-NSP complex to the cell periphery and facilitates movement across the cell wall. The chain is Nuclear shuttle protein from Indian cassava mosaic virus (ICMV).